The sequence spans 161 residues: Myosin regulatory light chain (161 aa).

Phosphoserine is present on residues Ser13 and Ser14. 3 consecutive EF-hand domains span residues 20–55 (EQVAELKEAFELFDKDRTGFIKKDALKTTCKQFGVF), 56–91 (VMEDQLDAMFAEADTTKSGAIGFPEFMSMMSRRMKQ), and 93–128 (SNEQILMNAFKTFDPEGNGYILTKDLSKALTTLGDK).

Myosin is a hexamer of 2 heavy chains and 4 light chains (two regulatory light chains and two essential light chains).

In Dictyostelium discoideum (Social amoeba), this protein is Myosin regulatory light chain (mlcR).